Consider the following 402-residue polypeptide: MSNHMSIMKFLNQILCLSLILSISMTTLSFAQTCSKYKFSSNNVFDSCNDLPFLDSFLHYTYESSTGSLHIAYRHTKLTSGKWVAWAVNPTSTGMVGAQAIVAYPQSDGTVRVYTSPIRSYQTSLLEGDLSFNVSGLSATYQNNEIVVLASLKLAQDLGNGGTINTVWQDGSMSGNSLLPHPTSGNNVRSVSTLNLVSGVSAAAGGAGGSSKLRKRNIHGILNGVSWGIMMPLGAIIARYLRVAKSADPAWFYIHVFCQASAYIIGVAGWATGLKLGGDSPGIQYSTHRAIGIALFSLATVQVFAMFLRPKPEHKHRLYWNIYHHTIGYTIIILGVVNVFKGLGILSPKKQWKNAYIGIIVVLAIVATLLEAFTWYVVIKRRKLEAKTAQHGASNGTRSQYA.

Residues 1–31 (MSNHMSIMKFLNQILCLSLILSISMTTLSFA) form the signal peptide. Residues 54–171 (LDSFLHYTYE…GTINTVWQDG (118 aa)) form the DOMON domain. One can recognise a Cytochrome b561 domain in the interval 183 to 379 (TSGNNVRSVS…LEAFTWYVVI (197 aa)). The next 2 helical transmembrane spans lie at 218–238 (IHGI…AIIA) and 250–270 (AWFY…VAGW). H219, H255, and H288 together coordinate heme b. The chain crosses the membrane as a helical span at residues 290–310 (AIGIALFSLATVQVFAMFLRP). H324 contributes to the heme b binding site. The next 2 membrane-spanning stretches (helical) occupy residues 326-346 (TIGY…LGIL) and 359-379 (IIVV…YVVI).

The cofactor is heme b.

The protein localises to the membrane. May act as a catecholamine-responsive trans-membrane electron transporter. This chain is Cytochrome b561 and DOMON domain-containing protein At4g17280, found in Arabidopsis thaliana (Mouse-ear cress).